We begin with the raw amino-acid sequence, 236 residues long: Penton protein H240R (236 aa).

This sequence belongs to the asfivirus H240R family.

It is found in the virion. In terms of biological role, forms the penton at the fivefold vertices of the icosahedral capsid. Together with the minor capsid proteins (p17, p49, and M1249L), forms a complicated network immediately below the outer capsid shell, stabilizing the whole capsid. In African swine fever virus (isolate Pig/Kenya/KEN-50/1950) (ASFV), this protein is Penton protein H240R.